Here is a 201-residue protein sequence, read N- to C-terminus: Small ribosomal subunit protein uS4c (201 aa).

Residues 89–150 (MRLDNILFRL…KQRSKVLIQN (62 aa)) form the S4 RNA-binding domain.

This sequence belongs to the universal ribosomal protein uS4 family. As to quaternary structure, part of the 30S ribosomal subunit. Contacts protein S5. The interaction surface between S4 and S5 is involved in control of translational fidelity.

It localises to the plastid. Its subcellular location is the chloroplast. Its function is as follows. One of the primary rRNA binding proteins, it binds directly to 16S rRNA where it nucleates assembly of the body of the 30S subunit. Functionally, with S5 and S12 plays an important role in translational accuracy. The polypeptide is Small ribosomal subunit protein uS4c (rps4) (Dioscorea elephantipes (Elephant's foot yam)).